The chain runs to 157 residues: MSEDAPKILGPLDVRRVMAALPHRYPLLLVDRVEELVVDERITAIKAVTINENFFQGHFPGRPIMPGVLIVEAMAQAAGVLAVESLGLAGSGKLVYFMTIDEVKFRTPVEPGVLLRLEVAFAQKRGSVCKFEGKAYIGDKLAAQANFTAMIADPPTD.

Histidine 58 is a catalytic residue.

It belongs to the thioester dehydratase family. FabZ subfamily.

Its subcellular location is the cytoplasm. The enzyme catalyses a (3R)-hydroxyacyl-[ACP] = a (2E)-enoyl-[ACP] + H2O. Functionally, involved in unsaturated fatty acids biosynthesis. Catalyzes the dehydration of short chain beta-hydroxyacyl-ACPs and long chain saturated and unsaturated beta-hydroxyacyl-ACPs. The sequence is that of 3-hydroxyacyl-[acyl-carrier-protein] dehydratase FabZ from Rhizorhabdus wittichii (strain DSM 6014 / CCUG 31198 / JCM 15750 / NBRC 105917 / EY 4224 / RW1) (Sphingomonas wittichii).